Here is a 518-residue protein sequence, read N- to C-terminus: Putative Rieske 2Fe-2S iron-sulfur protein MSMEG_6410/MSMEI_6242 (518 aa).

An Isoglutamyl lysine isopeptide (Lys-Gln) (interchain with Q-Cter in protein Pup) cross-link involves residue Lys-375. The Rieske domain maps to 431–518 (LYTFFKCLTD…KGHELRCQKL (88 aa)). [2Fe-2S] cluster contacts are provided by Cys-471, His-473, Cys-491, and His-494.

The cofactor is [2Fe-2S] cluster.

This Mycolicibacterium smegmatis (strain ATCC 700084 / mc(2)155) (Mycobacterium smegmatis) protein is Putative Rieske 2Fe-2S iron-sulfur protein MSMEG_6410/MSMEI_6242.